The primary structure comprises 101 residues: Small ribosomal subunit protein uS14 (101 aa).

The segment at 1–26 (MAKVSSIKKNESRKKKSQSLHNKRSA) is disordered. The span at 11–26 (ESRKKKSQSLHNKRSA) shows a compositional bias: basic residues.

It belongs to the universal ribosomal protein uS14 family. Part of the 30S ribosomal subunit. Contacts proteins S3 and S10.

Binds 16S rRNA, required for the assembly of 30S particles and may also be responsible for determining the conformation of the 16S rRNA at the A site. This chain is Small ribosomal subunit protein uS14, found in Rickettsia felis (strain ATCC VR-1525 / URRWXCal2) (Rickettsia azadi).